The sequence spans 201 residues: uncharacterized protein (201 aa).

The next 4 membrane-spanning stretches (helical) occupy residues 9–29, 42–62, 86–106, and 126–146; these read YNVF…ILVA, FLFV…FFDV, SGVI…VVMV, and LPYL…SIGM. 2 stretches are compositionally biased toward basic and acidic residues: residues 165-174 and 182-191; these read EPTDPNKTDN and DENKKNEKEQ. Residues 165–201 are disordered; that stretch reads EPTDPNKTDNRAVVINLDENKKNEKEQSPPSAEMTSL. A compositionally biased stretch (polar residues) spans 192–201; sequence SPPSAEMTSL.

The protein localises to the cell membrane. This is an uncharacterized protein from Mycoplasma genitalium (strain ATCC 33530 / DSM 19775 / NCTC 10195 / G37) (Mycoplasmoides genitalium).